The primary structure comprises 977 residues: Myb-like protein I (977 aa).

Residues 1–122 (MMNNQSMVRY…QQQQQQLDKS (122 aa)) form a disordered region. Pro residues predominate over residues 21–39 (PSPPVYSPIYRSPPPPPQP). The segment covering 52-68 (DNSHHQVMDNSDHEQQQ) has biased composition (basic and acidic residues). A compositionally biased stretch (low complexity) spans 75 to 118 (QQQQQQQHHHQQQQQQQHHQQQQQQHHQQQQQHHHQQQQQQQQQ). Residues 167–222 (EKKKQSRYWTPEEHSRFIEALSKYGHKDVKSISQYVSTRNPTQVRTHAQKYFLRID) form the HTH myb-type domain. The H-T-H motif DNA-binding region spans 195–218 (VKSISQYVSTRNPTQVRTHAQKYF). Disordered stretches follow at residues 229-331 (LESK…SSPL), 422-516 (INNN…SSQP), 531-650 (NNNN…QQQM), 738-853 (LNSN…WPGP), and 872-960 (NYVP…GMNQ). Residues 241–252 (KDDDWLREEYND) show a composition bias toward acidic residues. The span at 254-275 (GSPTQYSSCSNSPTTNSVANPF) shows a compositional bias: polar residues. Low complexity-rich tracts occupy residues 276–329 (SNSL…GNSS) and 422–504 (INNN…INNN). Residues 505–516 (GPNSPNLLSSQP) are compositionally biased toward polar residues. A compositionally biased stretch (low complexity) spans 738–754 (LNSNSGNSSPNISSING). Over residues 783–797 (LSGSPSHSPAQSPHY) the composition is skewed to polar residues. Composition is skewed to low complexity over residues 798-848 (NLNN…SHSI) and 887-943 (SPHF…GSGS). Polar residues predominate over residues 944–960 (WHQYQATDSPTGWGMNQ).

It localises to the nucleus. This Dictyostelium discoideum (Social amoeba) protein is Myb-like protein I (mybI).